The chain runs to 554 residues: Formate--tetrahydrofolate ligase (554 aa).

63-70 contacts ATP; sequence TPAGEGKT.

Belongs to the formate--tetrahydrofolate ligase family.

It carries out the reaction (6S)-5,6,7,8-tetrahydrofolate + formate + ATP = (6R)-10-formyltetrahydrofolate + ADP + phosphate. Its pathway is one-carbon metabolism; tetrahydrofolate interconversion. This is Formate--tetrahydrofolate ligase from Halothermothrix orenii (strain H 168 / OCM 544 / DSM 9562).